Consider the following 98-residue polypeptide: Large ribosomal subunit protein uL23 (98 aa).

This sequence belongs to the universal ribosomal protein uL23 family. As to quaternary structure, part of the 50S ribosomal subunit. Contacts protein L29, and trigger factor when it is bound to the ribosome.

Functionally, one of the early assembly proteins it binds 23S rRNA. One of the proteins that surrounds the polypeptide exit tunnel on the outside of the ribosome. Forms the main docking site for trigger factor binding to the ribosome. This Frankia alni (strain DSM 45986 / CECT 9034 / ACN14a) protein is Large ribosomal subunit protein uL23.